A 118-amino-acid chain; its full sequence is Putative pterin-4-alpha-carbinolamine dehydratase (118 aa).

The protein belongs to the pterin-4-alpha-carbinolamine dehydratase family.

It carries out the reaction (4aS,6R)-4a-hydroxy-L-erythro-5,6,7,8-tetrahydrobiopterin = (6R)-L-erythro-6,7-dihydrobiopterin + H2O. The chain is Putative pterin-4-alpha-carbinolamine dehydratase from Xanthomonas oryzae pv. oryzae (strain PXO99A).